Consider the following 131-residue polypeptide: Small ribosomal subunit protein uS8 (131 aa).

It belongs to the universal ribosomal protein uS8 family. Part of the 30S ribosomal subunit. Contacts proteins S5 and S12.

Functionally, one of the primary rRNA binding proteins, it binds directly to 16S rRNA central domain where it helps coordinate assembly of the platform of the 30S subunit. The protein is Small ribosomal subunit protein uS8 of Shewanella amazonensis (strain ATCC BAA-1098 / SB2B).